The chain runs to 135 residues: UPF0216 protein MTH_949 (135 aa).

The protein belongs to the UPF0216 family.

This is UPF0216 protein MTH_949 from Methanothermobacter thermautotrophicus (strain ATCC 29096 / DSM 1053 / JCM 10044 / NBRC 100330 / Delta H) (Methanobacterium thermoautotrophicum).